The primary structure comprises 219 residues: Protein-L-isoaspartate O-methyltransferase 2 (219 aa).

Residue Ser66 is part of the active site.

This sequence belongs to the methyltransferase superfamily. L-isoaspartyl/D-aspartyl protein methyltransferase family.

Its subcellular location is the cytoplasm. It catalyses the reaction [protein]-L-isoaspartate + S-adenosyl-L-methionine = [protein]-L-isoaspartate alpha-methyl ester + S-adenosyl-L-homocysteine. Functionally, catalyzes the methyl esterification of L-isoaspartyl residues in peptides and proteins that result from spontaneous decomposition of normal L-aspartyl and L-asparaginyl residues. It plays a role in the repair and/or degradation of damaged proteins. The chain is Protein-L-isoaspartate O-methyltransferase 2 from Marinobacter nauticus (strain ATCC 700491 / DSM 11845 / VT8) (Marinobacter aquaeolei).